A 196-amino-acid polypeptide reads, in one-letter code: MVAYKNIALLALTFTIASVESLSIVGARPYIDKALSVFDIKTPNSQSEKPEIILTFAGPDDKPVPGDSPIVQCEASVPQLLNLQSVVIDPNPPLRGENLTFVAKGVLSQDIEDGAYVEVDVRYGFIKLLHQTFDLCEEITKIDLECPISKGQQVIEKKVEIPAEVPPGKYIVSARAYTKDDIFITCLSAMVEFPPL.

Positions 1 to 21 are cleaved as a signal peptide; that stretch reads MVAYKNIALLALTFTIASVES. Residues 22 to 60 constitute a propeptide that is removed on maturation; it reads LSIVGARPYIDKALSVFDIKTPNSQSEKPEIILTFAGPD.

This sequence belongs to the NPC2 family. As to quaternary structure, monomer.

Its function is as follows. Catalyzes the intermembrane transfer of phosphatidylglycerol and phosphatidylinositol. The protein is Phosphatidylglycerol/phosphatidylinositol transfer protein (NPC2) of Debaryomyces hansenii (strain ATCC 36239 / CBS 767 / BCRC 21394 / JCM 1990 / NBRC 0083 / IGC 2968) (Yeast).